We begin with the raw amino-acid sequence, 115 residues long: Large ribosomal subunit protein bL20 (115 aa).

It belongs to the bacterial ribosomal protein bL20 family.

Functionally, binds directly to 23S ribosomal RNA and is necessary for the in vitro assembly process of the 50S ribosomal subunit. It is not involved in the protein synthesizing functions of that subunit. The polypeptide is Large ribosomal subunit protein bL20 (Prochlorococcus marinus (strain MIT 9301)).